We begin with the raw amino-acid sequence, 188 residues long: GTP cyclohydrolase 1 (188 aa).

Zn(2+)-binding residues include Cys-73, His-76, and Cys-144.

Belongs to the GTP cyclohydrolase I family. As to quaternary structure, homomer.

It catalyses the reaction GTP + H2O = 7,8-dihydroneopterin 3'-triphosphate + formate + H(+). It functions in the pathway cofactor biosynthesis; 7,8-dihydroneopterin triphosphate biosynthesis; 7,8-dihydroneopterin triphosphate from GTP: step 1/1. This Caldivirga maquilingensis (strain ATCC 700844 / DSM 13496 / JCM 10307 / IC-167) protein is GTP cyclohydrolase 1.